A 145-amino-acid polypeptide reads, in one-letter code: Putative pre-16S rRNA nuclease (145 aa).

The protein belongs to the YqgF nuclease family.

It localises to the cytoplasm. Its function is as follows. Could be a nuclease involved in processing of the 5'-end of pre-16S rRNA. In Opitutus terrae (strain DSM 11246 / JCM 15787 / PB90-1), this protein is Putative pre-16S rRNA nuclease.